Here is a 463-residue protein sequence, read N- to C-terminus: ATP-dependent protease ATPase subunit HslU (463 aa).

ATP contacts are provided by residues Val21, 63–68, Asp276, Glu341, and Arg413; that span reads GVGKTE.

This sequence belongs to the ClpX chaperone family. HslU subfamily. In terms of assembly, a double ring-shaped homohexamer of HslV is capped on each side by a ring-shaped HslU homohexamer. The assembly of the HslU/HslV complex is dependent on binding of ATP.

It localises to the cytoplasm. Its function is as follows. ATPase subunit of a proteasome-like degradation complex; this subunit has chaperone activity. The binding of ATP and its subsequent hydrolysis by HslU are essential for unfolding of protein substrates subsequently hydrolyzed by HslV. HslU recognizes the N-terminal part of its protein substrates and unfolds these before they are guided to HslV for hydrolysis. This Thermotoga neapolitana (strain ATCC 49049 / DSM 4359 / NBRC 107923 / NS-E) protein is ATP-dependent protease ATPase subunit HslU.